Here is a 331-residue protein sequence, read N- to C-terminus: Probable allantoicase (331 aa).

This sequence belongs to the allantoicase family.

The enzyme catalyses allantoate + H2O = (S)-ureidoglycolate + urea. It functions in the pathway nitrogen metabolism; (S)-allantoin degradation; (S)-ureidoglycolate from allantoate (aminidohydrolase route): step 1/1. The protein is Probable allantoicase of Pseudomonas syringae pv. tomato (strain ATCC BAA-871 / DC3000).